The chain runs to 347 residues: MNEPLKPRVTFDDVSPQEPQPQLRAGLAFDEQSSTPFSPISREEEVPEEGAAEEAISAALRPKRSLWRRMVMAGVALFGISALAQGVQSLHNAWVQQDWIALGGITAGSLIVAAGVGSLAVEWRRLYRLRERAEERDMARDLLHSHGVERGREFCEKLARQAGLDSGHPAIQRWQASLHETHNDREVLELYARLVQPVLDTQARREISRSAAESTLMIAVSPLALVDMAFIAWRNLRLINRIAALYGIELGYFSRIRLFRLVLINIAFAGASELVREIGMDWMSQDLAARLSTRAAQGIGAGLLTARLGIKAMELCRPLPWLDDKPRLGDFRRELIGQVKETLQKGR.

A compositionally biased stretch (basic and acidic residues) spans 1–11 (MNEPLKPRVTF). The disordered stretch occupies residues 1–48 (MNEPLKPRVTFDDVSPQEPQPQLRAGLAFDEQSSTPFSPISREEEVPE). The next 3 membrane-spanning stretches (helical) occupy residues 70–90 (MVMA…VQSL), 99–119 (WIAL…VGSL), and 213–233 (ESTL…FIAW).

Belongs to the UPF0283 family.

The protein resides in the cell inner membrane. This is UPF0283 membrane protein ECA1987 from Pectobacterium atrosepticum (strain SCRI 1043 / ATCC BAA-672) (Erwinia carotovora subsp. atroseptica).